The sequence spans 380 residues: Queuine tRNA-ribosyltransferase (380 aa).

The active-site Proton acceptor is D96. Residues 96–100, D150, Q193, and G220 contribute to the substrate site; that span reads DSGGF. Positions 251 to 257 are RNA binding; it reads GVGAPDS. Catalysis depends on D270, which acts as the Nucleophile. Residues 275-279 form an RNA binding; important for wobble base 34 recognition region; that stretch reads TRIAR. Zn(2+)-binding residues include C308, C310, C313, and H339.

This sequence belongs to the queuine tRNA-ribosyltransferase family. Homodimer. Within each dimer, one monomer is responsible for RNA recognition and catalysis, while the other monomer binds to the replacement base PreQ1. Zn(2+) is required as a cofactor.

It carries out the reaction 7-aminomethyl-7-carbaguanine + guanosine(34) in tRNA = 7-aminomethyl-7-carbaguanosine(34) in tRNA + guanine. It functions in the pathway tRNA modification; tRNA-queuosine biosynthesis. Its function is as follows. Catalyzes the base-exchange of a guanine (G) residue with the queuine precursor 7-aminomethyl-7-deazaguanine (PreQ1) at position 34 (anticodon wobble position) in tRNAs with GU(N) anticodons (tRNA-Asp, -Asn, -His and -Tyr). Catalysis occurs through a double-displacement mechanism. The nucleophile active site attacks the C1' of nucleotide 34 to detach the guanine base from the RNA, forming a covalent enzyme-RNA intermediate. The proton acceptor active site deprotonates the incoming PreQ1, allowing a nucleophilic attack on the C1' of the ribose to form the product. After dissociation, two additional enzymatic reactions on the tRNA convert PreQ1 to queuine (Q), resulting in the hypermodified nucleoside queuosine (7-(((4,5-cis-dihydroxy-2-cyclopenten-1-yl)amino)methyl)-7-deazaguanosine). The chain is Queuine tRNA-ribosyltransferase from Streptococcus pyogenes serotype M1.